Reading from the N-terminus, the 305-residue chain is Probable xyloglucan endotransglucosylase/hydrolase protein 8 (305 aa).

Residues 1 to 31 (METERRIITSCSAMTALFLFMTALMASSSIA) form the signal peptide. The region spanning 32-231 (ATPTQSFEDN…WKKAPFVSSY (200 aa)) is the GH16 domain. Residues asparagine 61 and asparagine 66 are each glycosylated (N-linked (GlcNAc...) asparagine). The Nucleophile role is filled by glutamate 115. Glutamate 119 acts as the Proton donor in catalysis. Residue glutamate 119 coordinates xyloglucan. Asparagine 123 is a glycosylation site (N-linked (GlcNAc...) asparagine). Position 132 to 134 (132 to 134 (QTN)) interacts with xyloglucan. An N-linked (GlcNAc...) asparagine glycan is attached at asparagine 138. Residues 142-144 (NRE), 210-211 (DW), and glycine 215 contribute to the xyloglucan site. 2 disulfides stabilise this stretch: cysteine 239–cysteine 248 and cysteine 286–cysteine 299. Arginine 291 contributes to the xyloglucan binding site.

Belongs to the glycosyl hydrolase 16 family. XTH group 1 subfamily. Post-translationally, contains at least one intrachain disulfide bond essential for its enzymatic activity.

Its subcellular location is the secreted. The protein localises to the cell wall. The protein resides in the extracellular space. It is found in the apoplast. It catalyses the reaction breaks a beta-(1-&gt;4) bond in the backbone of a xyloglucan and transfers the xyloglucanyl segment on to O-4 of the non-reducing terminal glucose residue of an acceptor, which can be a xyloglucan or an oligosaccharide of xyloglucan.. Catalyzes xyloglucan endohydrolysis (XEH) and/or endotransglycosylation (XET). Cleaves and religates xyloglucan polymers, an essential constituent of the primary cell wall, and thereby participates in cell wall construction of growing tissues. In Arabidopsis thaliana (Mouse-ear cress), this protein is Probable xyloglucan endotransglucosylase/hydrolase protein 8 (XTH8).